Here is a 206-residue protein sequence, read N- to C-terminus: MAVYKNLSPEQTVLLQQGRVAGVDEVGRGPLVGDVVTAAVILDPNKPIAGLNDSKKLTEKKRDALYLEIMDKALAVSVGRASPTEIDELNILHATMLAMQRAVAGLTIVPESVLVDGNRTPDFGVPAHAVVKGDGLIAAISAASVIAKVTRDREMGELDARYPQYGFAGHKGYPTKAHFEAISAHGVLAEHRRSFRPVREWLEANS.

Residues 18 to 206 (GRVAGVDEVG…PVREWLEANS (189 aa)) enclose the RNase H type-2 domain. Positions 24, 25, and 116 each coordinate a divalent metal cation.

This sequence belongs to the RNase HII family. The cofactor is Mn(2+). Requires Mg(2+) as cofactor.

The protein localises to the cytoplasm. The enzyme catalyses Endonucleolytic cleavage to 5'-phosphomonoester.. Functionally, endonuclease that specifically degrades the RNA of RNA-DNA hybrids. This Shewanella amazonensis (strain ATCC BAA-1098 / SB2B) protein is Ribonuclease HII.